The following is a 214-amino-acid chain: Ribosomal RNA small subunit methyltransferase G (214 aa).

Residues glycine 77, leucine 82, 128-129, and arginine 143 each bind S-adenosyl-L-methionine; that span reads VE.

Belongs to the methyltransferase superfamily. RNA methyltransferase RsmG family.

Its subcellular location is the cytoplasm. The catalysed reaction is guanosine(527) in 16S rRNA + S-adenosyl-L-methionine = N(7)-methylguanosine(527) in 16S rRNA + S-adenosyl-L-homocysteine. Specifically methylates the N7 position of guanine in position 527 of 16S rRNA. This is Ribosomal RNA small subunit methyltransferase G from Nitrosococcus oceani (strain ATCC 19707 / BCRC 17464 / JCM 30415 / NCIMB 11848 / C-107).